A 390-amino-acid chain; its full sequence is Chitinase-3-like protein 2 (390 aa).

An N-terminal signal peptide occupies residues 1–26 (MGATTMDQKSLWAGVVVLLLLQGGSA). In terms of domain architecture, GH18 spans 27–390 (YKLVCYFTNW…QAVKRSLGSL (364 aa)). A disulfide bridge links Cys31 with Cys56. Asn35 carries N-linked (GlcNAc...) asparagine glycosylation. Residues 75-76 (DK), 102-105 (GGYL), Tyr104, Tyr146, 210-213 (LSFD), Asp213, and Trp360 contribute to the chitin site.

The protein belongs to the glycosyl hydrolase 18 family. In terms of tissue distribution, highest expression in chondrocytes, followed by synoviocytes, lung and heart. Not detected in spleen, pancreas, and liver. May also be expressed in developing brain and placenta.

The protein resides in the secreted. Its function is as follows. Lectin that binds chitooligosaccharides and other glycans with high affinity, but not heparin. Has no chitinase activity. The polypeptide is Chitinase-3-like protein 2 (CHI3L2) (Homo sapiens (Human)).